The sequence spans 82 residues: Cyclin-dependent protein kinase inhibitor SMR5 (82 aa).

Positions methionine 1–threonine 26 are disordered. A compositionally biased stretch (acidic residues) spans aspartate 8 to tyrosine 18.

As to quaternary structure, interacts with CDKA-1 and D-type cyclins. As to expression, expressed in columella cells in the roots and in root meristems after induction.

Functionally, probable cyclin-dependent protein kinase (CDK) inhibitor that functions as a repressor of mitosis in the endoreduplication cell cycle. Acts as a potent cell cycle inhibitor, regulating a hydroxyurea-dependent checkpoint in leaves. Essential to activate a high-light-dependent cell cycle checkpoint. In Arabidopsis thaliana (Mouse-ear cress), this protein is Cyclin-dependent protein kinase inhibitor SMR5.